The chain runs to 90 residues: Small ribosomal subunit protein uS15 (90 aa).

The protein belongs to the universal ribosomal protein uS15 family. In terms of assembly, part of the 30S ribosomal subunit. Forms a bridge to the 50S subunit in the 70S ribosome, contacting the 23S rRNA.

In terms of biological role, one of the primary rRNA binding proteins, it binds directly to 16S rRNA where it helps nucleate assembly of the platform of the 30S subunit by binding and bridging several RNA helices of the 16S rRNA. Its function is as follows. Forms an intersubunit bridge (bridge B4) with the 23S rRNA of the 50S subunit in the ribosome. This is Small ribosomal subunit protein uS15 from Campylobacter jejuni subsp. jejuni serotype O:6 (strain 81116 / NCTC 11828).